A 118-amino-acid chain; its full sequence is Small ribosomal subunit protein uS13 (118 aa).

A disordered region spans residues serine 94–lysine 118.

The protein belongs to the universal ribosomal protein uS13 family. As to quaternary structure, part of the 30S ribosomal subunit. Forms a loose heterodimer with protein S19. Forms two bridges to the 50S subunit in the 70S ribosome.

Located at the top of the head of the 30S subunit, it contacts several helices of the 16S rRNA. In the 70S ribosome it contacts the 23S rRNA (bridge B1a) and protein L5 of the 50S subunit (bridge B1b), connecting the 2 subunits; these bridges are implicated in subunit movement. Contacts the tRNAs in the A and P-sites. This chain is Small ribosomal subunit protein uS13, found in Shewanella sediminis (strain HAW-EB3).